Consider the following 274-residue polypeptide: Cyclase-like protein 1 (274 aa).

An N-terminal signal peptide occupies residues 1-18 (MAASRLALLLLVLAVAAA).

The protein belongs to the Cyclase 1 superfamily. In terms of tissue distribution, highly expressed in leaf sheaths. Expressed in leaf collars.

Its subcellular location is the secreted. It localises to the extracellular space. The protein localises to the extracellular matrix. May be involved in response to stresses. In Oryza sativa subsp. japonica (Rice), this protein is Cyclase-like protein 1.